The primary structure comprises 256 residues: Tryptophan synthase alpha chain (256 aa).

Catalysis depends on proton acceptor residues Glu45 and Asp56.

This sequence belongs to the TrpA family. As to quaternary structure, tetramer of two alpha and two beta chains.

The enzyme catalyses (1S,2R)-1-C-(indol-3-yl)glycerol 3-phosphate + L-serine = D-glyceraldehyde 3-phosphate + L-tryptophan + H2O. It functions in the pathway amino-acid biosynthesis; L-tryptophan biosynthesis; L-tryptophan from chorismate: step 5/5. Its function is as follows. The alpha subunit is responsible for the aldol cleavage of indoleglycerol phosphate to indole and glyceraldehyde 3-phosphate. The polypeptide is Tryptophan synthase alpha chain (Christiangramia forsetii (strain DSM 17595 / CGMCC 1.15422 / KT0803) (Gramella forsetii)).